Here is a 29-residue protein sequence, read N- to C-terminus: Trypsin inhibitor 1 (29 aa).

Cystine bridges form between cysteine 3/cysteine 20, cysteine 10/cysteine 22, and cysteine 16/cysteine 28.

The protein belongs to the protease inhibitor I7 (squash-type serine protease inhibitor) family.

It localises to the secreted. Its function is as follows. Inhibits trypsin. The polypeptide is Trypsin inhibitor 1 (Momordica repens).